The chain runs to 120 residues: NAD(P)H-quinone oxidoreductase subunit 3, chloroplastic (120 aa).

3 helical membrane-spanning segments follow: residues 9–29 (IFWT…LISG), 64–84 (MFAL…PWAM), and 88–108 (VLGV…IVGS).

This sequence belongs to the complex I subunit 3 family. In terms of assembly, NDH is composed of at least 16 different subunits, 5 of which are encoded in the nucleus.

It localises to the plastid. Its subcellular location is the chloroplast thylakoid membrane. The enzyme catalyses a plastoquinone + NADH + (n+1) H(+)(in) = a plastoquinol + NAD(+) + n H(+)(out). It carries out the reaction a plastoquinone + NADPH + (n+1) H(+)(in) = a plastoquinol + NADP(+) + n H(+)(out). In terms of biological role, NDH shuttles electrons from NAD(P)H:plastoquinone, via FMN and iron-sulfur (Fe-S) centers, to quinones in the photosynthetic chain and possibly in a chloroplast respiratory chain. The immediate electron acceptor for the enzyme in this species is believed to be plastoquinone. Couples the redox reaction to proton translocation, and thus conserves the redox energy in a proton gradient. In Piper cenocladum (Ant piper), this protein is NAD(P)H-quinone oxidoreductase subunit 3, chloroplastic.